The following is a 43-amino-acid chain: Protein PsbN (43 aa).

The chain crosses the membrane as a helical span at residues 5–27 (TVLSIFISSLLLGITGYSIYTAF).

The protein belongs to the PsbN family.

Its subcellular location is the plastid. It is found in the chloroplast thylakoid membrane. May play a role in photosystem I and II biogenesis. The protein is Protein PsbN of Porphyra purpurea (Red seaweed).